Consider the following 154-residue polypeptide: Large ribosomal subunit protein uL13 (154 aa).

The protein belongs to the universal ribosomal protein uL13 family. As to quaternary structure, part of the 50S ribosomal subunit.

This protein is one of the early assembly proteins of the 50S ribosomal subunit, although it is not seen to bind rRNA by itself. It is important during the early stages of 50S assembly. In Rhodopseudomonas palustris (strain ATCC BAA-98 / CGA009), this protein is Large ribosomal subunit protein uL13.